A 304-amino-acid chain; its full sequence is MPQQLSPINIETKKAISDARLKTLDIHYNESKPTTIQNTGKLVRINFKGGYISGGFLPNEYVLSTIHIYWGKEDDYGSNHLIDVYKYSGEINLVHWNKKKYSSYEEAKKHDDGIIIIAIFLQVSDHKNVYFQKIVNQLDSIRSANMSAPFDSVFYLDNLLPSTLDYFTYLGTTINHSADAAWIIFPTPINIHSDQLSKFRTLLSSSNHEGKPHYITENYRNPYKLNDDTQVYYSGEIIRAATTSPVRENYFMKWLSDLREACFSYYQKYIEGNKTFAIIAIVFVFILTAILFLMSQRYSREKQN.

It belongs to the alpha-carbonic anhydrase family. As to quaternary structure, homodimer; disulfide-linked. In terms of processing, apparently non-glycosylated.

The protein localises to the virion membrane. In terms of biological role, binds to chondroitin sulfate on the cell surface to provide virion attachment to target cell. In Monkeypox virus, this protein is Cell surface-binding protein OPG105 (OPG105).